Reading from the N-terminus, the 207-residue chain is Outer-membrane lipoprotein LolB (207 aa).

The N-terminal stretch at 1–21 (MPLPDFRFIRLLPLAALVLTA) is a signal peptide. Cys-22 carries the N-palmitoyl cysteine lipid modification. A lipid anchor (S-diacylglycerol cysteine) is attached at Cys-22.

Belongs to the LolB family. As to quaternary structure, monomer.

Its subcellular location is the cell outer membrane. In terms of biological role, plays a critical role in the incorporation of lipoproteins in the outer membrane after they are released by the LolA protein. This Escherichia coli O6:H1 (strain CFT073 / ATCC 700928 / UPEC) protein is Outer-membrane lipoprotein LolB.